The primary structure comprises 115 residues: MSAQKSAGIQLLLDAEREATKIVQKAREYRTKRVREARDEAKKEIEAYKAQKEAEFKKFEAEHTQGNQAAQEEANAEAEARIREIKEAGNKNREQVIKDLLHAVFTPSPEAMAAH.

This sequence belongs to the V-ATPase G subunit family. In terms of assembly, V-ATPase is a heteromultimeric enzyme composed of a peripheral catalytic V1 complex (components A to H) attached to an integral membrane V0 proton pore complex (components: a, c, c', c'', d, e, f and VOA1).

It localises to the vacuole membrane. Subunit of the V1 complex of vacuolar(H+)-ATPase (V-ATPase), a multisubunit enzyme composed of a peripheral complex (V1) that hydrolyzes ATP and a membrane integral complex (V0) that translocates protons. V-ATPase is responsible for acidifying and maintaining the pH of intracellular compartments. This chain is V-type proton ATPase subunit G (vma-10), found in Neurospora crassa (strain ATCC 24698 / 74-OR23-1A / CBS 708.71 / DSM 1257 / FGSC 987).